We begin with the raw amino-acid sequence, 384 residues long: Methylthioribose-1-phosphate isomerase (384 aa).

Aspartate 255 (proton donor) is an active-site residue.

It belongs to the eIF-2B alpha/beta/delta subunits family. MtnA subfamily.

The protein localises to the cytoplasm. The protein resides in the nucleus. The catalysed reaction is 5-(methylsulfanyl)-alpha-D-ribose 1-phosphate = 5-(methylsulfanyl)-D-ribulose 1-phosphate. It functions in the pathway amino-acid biosynthesis; L-methionine biosynthesis via salvage pathway; L-methionine from S-methyl-5-thio-alpha-D-ribose 1-phosphate: step 1/6. Functionally, catalyzes the interconversion of methylthioribose-1-phosphate (MTR-1-P) into methylthioribulose-1-phosphate (MTRu-1-P). The polypeptide is Methylthioribose-1-phosphate isomerase (mri1) (Talaromyces marneffei (strain ATCC 18224 / CBS 334.59 / QM 7333) (Penicillium marneffei)).